Consider the following 256-residue polypeptide: Tryptophan synthase alpha chain (256 aa).

Active-site proton acceptor residues include Glu46 and Asp57.

The protein belongs to the TrpA family. Tetramer of two alpha and two beta chains.

The enzyme catalyses (1S,2R)-1-C-(indol-3-yl)glycerol 3-phosphate + L-serine = D-glyceraldehyde 3-phosphate + L-tryptophan + H2O. It participates in amino-acid biosynthesis; L-tryptophan biosynthesis; L-tryptophan from chorismate: step 5/5. In terms of biological role, the alpha subunit is responsible for the aldol cleavage of indoleglycerol phosphate to indole and glyceraldehyde 3-phosphate. This Bacteroides thetaiotaomicron (strain ATCC 29148 / DSM 2079 / JCM 5827 / CCUG 10774 / NCTC 10582 / VPI-5482 / E50) protein is Tryptophan synthase alpha chain.